The primary structure comprises 961 residues: Exportin-T (961 aa).

This sequence belongs to the exportin family.

It is found in the cytoplasm. The protein localises to the nucleus. Its function is as follows. Mediates the nuclear export of aminoacylated tRNAs. This Danio rerio (Zebrafish) protein is Exportin-T (xpot).